The primary structure comprises 122 residues: Large ribosomal subunit protein uL14 (122 aa).

This sequence belongs to the universal ribosomal protein uL14 family. In terms of assembly, part of the 50S ribosomal subunit. Forms a cluster with proteins L3 and L19. In the 70S ribosome, L14 and L19 interact and together make contacts with the 16S rRNA in bridges B5 and B8.

In terms of biological role, binds to 23S rRNA. Forms part of two intersubunit bridges in the 70S ribosome. This is Large ribosomal subunit protein uL14 from Bifidobacterium longum (strain DJO10A).